The primary structure comprises 546 residues: Tegument protein UL21 homolog (546 aa).

It belongs to the alphaherpesvirinae HHV-1 UL21 protein family.

Its subcellular location is the virion tegument. It localises to the host cytoplasm. The protein localises to the host nucleus. In terms of biological role, may facilitate the viral transport through neural circuits. This chain is Tegument protein UL21 homolog (MDV033), found in Gallus gallus (Chicken).